The following is a 399-amino-acid chain: 1-deoxy-D-xylulose 5-phosphate reductoisomerase (399 aa).

NADPH is bound by residues T11, G12, S13, I14, G37, N39, and N125. 1-deoxy-D-xylulose 5-phosphate is bound at residue K126. Residue E127 coordinates NADPH. D151 is a binding site for Mn(2+). 4 residues coordinate 1-deoxy-D-xylulose 5-phosphate: S152, E153, S177, and H200. E153 serves as a coordination point for Mn(2+). G206 lines the NADPH pocket. The 1-deoxy-D-xylulose 5-phosphate site is built by S213, N218, K219, and E222. E222 lines the Mn(2+) pocket.

Belongs to the DXR family. Mg(2+) is required as a cofactor. Requires Mn(2+) as cofactor.

The enzyme catalyses 2-C-methyl-D-erythritol 4-phosphate + NADP(+) = 1-deoxy-D-xylulose 5-phosphate + NADPH + H(+). Its pathway is isoprenoid biosynthesis; isopentenyl diphosphate biosynthesis via DXP pathway; isopentenyl diphosphate from 1-deoxy-D-xylulose 5-phosphate: step 1/6. Its function is as follows. Catalyzes the NADPH-dependent rearrangement and reduction of 1-deoxy-D-xylulose-5-phosphate (DXP) to 2-C-methyl-D-erythritol 4-phosphate (MEP). In Nostoc sp. (strain PCC 7120 / SAG 25.82 / UTEX 2576), this protein is 1-deoxy-D-xylulose 5-phosphate reductoisomerase.